The sequence spans 100 residues: UPF0235 protein NE0395 (100 aa).

It belongs to the UPF0235 family.

The protein is UPF0235 protein NE0395 of Nitrosomonas europaea (strain ATCC 19718 / CIP 103999 / KCTC 2705 / NBRC 14298).